The sequence spans 492 residues: Catalase-3 (492 aa).

Active-site residues include H65 and N138. Y348 provides a ligand contact to heme.

It belongs to the catalase family. Homotetramer and heterotetramer. At least six or seven isozymes are produced from a mixture of 3 gene products. Interacts with NCA1. Interacts with LSD1. It depends on heme as a cofactor.

It localises to the peroxisome. It catalyses the reaction 2 H2O2 = O2 + 2 H2O. Occurs in almost all aerobically respiring organisms and serves to protect cells from the toxic effects of hydrogen peroxide. This is Catalase-3 (CAT3) from Arabidopsis thaliana (Mouse-ear cress).